A 286-amino-acid chain; its full sequence is AB hydrolase superfamily protein YfhM (286 aa).

One can recognise an AB hydrolase-1 domain in the interval 27-272 (PLIVLLHGFP…ASHWINHEKP (246 aa)). Aspartate 103 (nucleophile) is an active-site residue. Residue tyrosine 210 is the Proton donor of the active site. The Proton acceptor role is filled by histidine 265.

Belongs to the AB hydrolase superfamily. Epoxide hydrolase family.

The polypeptide is AB hydrolase superfamily protein YfhM (yfhM) (Bacillus subtilis (strain 168)).